Consider the following 114-residue polypeptide: YETEKNNGAGYFLEHLAFKGTKNRPGNALEKHLSSVSRVYEEDAVPGLTPCRNALVSHLDGTTPVCEDIGRRIPLAEWESRYFYDQCPAVAGYGPIEQLPDYNRIRSGMFWLRF.

Position 31 is an N6-acetyllysine (Lys-31).

The protein belongs to the peptidase M16 family. UQCRC1/QCR1 subfamily. Component of the ubiquinol-cytochrome c oxidoreductase (cytochrome b-c1 complex, complex III, CIII), a multisubunit enzyme composed of 11 subunits. The complex is composed of 3 respiratory subunits cytochrome b, cytochrome c1 and Rieske protein UQCRFS1, 2 core protein subunits UQCRC1/QCR1 and UQCRC2/QCR2, and 6 low-molecular weight protein subunits UQCRH/QCR6, UQCRB/QCR7, UQCRQ/QCR8, UQCR10/QCR9, UQCR11/QCR10 and subunit 9, the cleavage product of Rieske protein UQCRFS1. The complex exists as an obligatory dimer and forms supercomplexes (SCs) in the inner mitochondrial membrane with NADH-ubiquinone oxidoreductase (complex I, CI) and cytochrome c oxidase (complex IV, CIV), resulting in different assemblies (supercomplex SCI(1)III(2)IV(1) and megacomplex MCI(2)III(2)IV(2)). Interacts with UQCC6. Interacts with STMP1.

It localises to the mitochondrion inner membrane. Its function is as follows. Component of the ubiquinol-cytochrome c oxidoreductase, a multisubunit transmembrane complex that is part of the mitochondrial electron transport chain which drives oxidative phosphorylation. The respiratory chain contains 3 multisubunit complexes succinate dehydrogenase (complex II, CII), ubiquinol-cytochrome c oxidoreductase (cytochrome b-c1 complex, complex III, CIII) and cytochrome c oxidase (complex IV, CIV), that cooperate to transfer electrons derived from NADH and succinate to molecular oxygen, creating an electrochemical gradient over the inner membrane that drives transmembrane transport and the ATP synthase. The cytochrome b-c1 complex catalyzes electron transfer from ubiquinol to cytochrome c, linking this redox reaction to translocation of protons across the mitochondrial inner membrane, with protons being carried across the membrane as hydrogens on the quinol. In the process called Q cycle, 2 protons are consumed from the matrix, 4 protons are released into the intermembrane space and 2 electrons are passed to cytochrome c. The 2 core subunits UQCRC1/QCR1 and UQCRC2/QCR2 are homologous to the 2 mitochondrial-processing peptidase (MPP) subunits beta-MPP and alpha-MPP respectively, and they seem to have preserved their MPP processing properties. May be involved in the in situ processing of UQCRFS1 into the mature Rieske protein and its mitochondrial targeting sequence (MTS)/subunit 9 when incorporated into complex III. Seems to play an important role in the maintenance of proper mitochondrial function in nigral dopaminergic neurons. This chain is Cytochrome b-c1 complex subunit 1, mitochondrial, found in Mesocricetus auratus (Golden hamster).